The primary structure comprises 329 residues: uncharacterized protein (329 aa).

Helical transmembrane passes span 13–35 (IPVL…WATI) and 229–248 (VIPA…SVVY).

It is found in the cell membrane. This is an uncharacterized protein from Archaeoglobus fulgidus (strain ATCC 49558 / DSM 4304 / JCM 9628 / NBRC 100126 / VC-16).